We begin with the raw amino-acid sequence, 355 residues long: MLKDKLQPFINRFEEINQLLMSSEITSDIKRMTDLSKEQSSIQPIVSKAKEYIKVLEDIEENKLMLDDPELGDLAKEELKELETRKPELEEEIKVLMIPKDPNDDRNIYLELRAGTGGDEAAIFVGDLFRAYLRYAENNGWKVEIMSSSDSESGGYKEIVILVKGDHVYSKLKFEGGTHRVQRVPATESQGRVHTSAITVAVMPEVDDVEIEINENDLKIDVMRASGNGGQSVNTTDSAVRITHIPSGIVVTNQDQKSQHKNKDRALKVLKAKLYEIEMEKKMEAEGATRKEQVGTGDRSGRIRTYNYPQNRISDHRINLTLYRLDYIMNDGLFGEVIDPLIADHQSKLIEANGL.

Glutamine 231 is modified (N5-methylglutamine).

Belongs to the prokaryotic/mitochondrial release factor family. Post-translationally, methylated by PrmC. Methylation increases the termination efficiency of RF1.

Its subcellular location is the cytoplasm. Functionally, peptide chain release factor 1 directs the termination of translation in response to the peptide chain termination codons UAG and UAA. The polypeptide is Peptide chain release factor 1 (Aliarcobacter butzleri (strain RM4018) (Arcobacter butzleri)).